The primary structure comprises 321 residues: uncharacterized protein (321 aa).

The protein belongs to the NAD(P)-dependent epimerase/dehydratase family.

This is an uncharacterized protein from Staphylococcus aureus (strain MRSA252).